Reading from the N-terminus, the 1350-residue chain is 1-phosphatidylinositol 4,5-bisphosphate phosphodiesterase gamma plc-3 (1350 aa).

The interval 1–40 (MQHGSLGPSSSSRKTTVTSTAGSVHLHHRSSNGFSTASRA) is disordered. The span at 9–20 (SSSSRKTTVTST) shows a compositional bias: low complexity. Positions 31-40 (SNGFSTASRA) are enriched in polar residues. The region spanning 352-503 (HDMSRPLSHY…LKKKIIVKHK (152 aa)) is the PI-PLC X-box domain. Active-site residues include His-367 and His-419. Positions 570-594 (NPNDDTVSVSGDEEREEETPSGFGV) are disordered. SH2 domains are found at residues 605–704 (WFHG…TIPC) and 715–804 (WFSA…RFPV). Residues 832-890 (DKEVQARALRPYRGTADDELSFPANVIITVLRKEEGLWRGRYGSLTGWFPSAHVQEILP) enclose the SH3 domain. A PH domain is found at 855 to 960 (ANVIITVLRK…WQNNLFELTR (106 aa)). The 111-residue stretch at 982-1092 (LSNLVVYCQA…CGYLLKPDYM (111 aa)) folds into the PI-PLC Y-box domain. The region spanning 1099–1220 (PTNTEKFATA…CGFRSVPLKN (122 aa)) is the C2 domain. The interval 1270 to 1350 (GDSIPREMAP…KFSFGKSSKS (81 aa)) is disordered. The span at 1283 to 1329 (TSATDRSLDSPTNSESRATLLSGQRGSQDSMDSAAETSSIASGTISS) shows a compositional bias: polar residues. Positions 1340 to 1350 (KKFSFGKSSKS) are enriched in low complexity.

Requires Ca(2+) as cofactor. As to expression, expressed in intestine, isthmus of the pharynx, proximal gonad sheath cells, spermatheca and uterine sheath cells. In males, expressed in the valve cell, the vas deferens and retractor and ventral protactor muscles.

It carries out the reaction a 1,2-diacyl-sn-glycero-3-phospho-(1D-myo-inositol-4,5-bisphosphate) + H2O = 1D-myo-inositol 1,4,5-trisphosphate + a 1,2-diacyl-sn-glycerol + H(+). Its function is as follows. Mediates the production of the second messenger molecules diacylglycerol (DAG) and inositol 1,4,5-trisphosphate (IP3) which plays an important role in the regulation of intracellular signaling cascades. Regulates basal and ovulatory sheath cell contractions by controlling Ca(2+) oscillations via IP3-mediated activation of IP3 receptor itr-1. In intestinal epithelial cells, regulates Ca(2+) oscillations which control posterior body wall muscle contractions required for defecation by IP3-mediated activation of itr-1 and probably by activating TRPM channels gon-2 and gtl-1 by reducing PIP2 levels. By activating tpa-1 via DAG production, required for the expression of antimicrobial peptide nlp-29 in the epidermis in response to fungal infection or physical injury. By triggering Ca(2+) transient via IP3-mediated activation of IPR3 receptor itr-1 in ASH sensory neurons, involved in avoidance behavior in response to nose touch. Probably by regulating neuronal transmission in ALA neurons, mediates the decrease in pharyngeal pumping and locomotion during the quiescent state that precedes each larval molt, downstream of lin-3 and receptor let-23 and upstream of tpa-1 but not itr-1. During embryogenesis, may play an role in epidermal morphogenesis together with plc-1. Probably downstream of receptor daf-2, regulates male-sex muscle excitability in the absence of food. The protein is 1-phosphatidylinositol 4,5-bisphosphate phosphodiesterase gamma plc-3 of Caenorhabditis elegans.